The chain runs to 144 residues: Large ribosomal subunit protein uL13 (144 aa).

This sequence belongs to the universal ribosomal protein uL13 family. Part of the 50S ribosomal subunit.

In terms of biological role, this protein is one of the early assembly proteins of the 50S ribosomal subunit, although it is not seen to bind rRNA by itself. It is important during the early stages of 50S assembly. In Clostridium tetani (strain Massachusetts / E88), this protein is Large ribosomal subunit protein uL13.